We begin with the raw amino-acid sequence, 448 residues long: Probable glycine dehydrogenase (decarboxylating) subunit 1 (448 aa).

Belongs to the GcvP family. N-terminal subunit subfamily. The glycine cleavage system is composed of four proteins: P, T, L and H. In this organism, the P 'protein' is a heterodimer of two subunits.

The catalysed reaction is N(6)-[(R)-lipoyl]-L-lysyl-[glycine-cleavage complex H protein] + glycine + H(+) = N(6)-[(R)-S(8)-aminomethyldihydrolipoyl]-L-lysyl-[glycine-cleavage complex H protein] + CO2. Its function is as follows. The glycine cleavage system catalyzes the degradation of glycine. The P protein binds the alpha-amino group of glycine through its pyridoxal phosphate cofactor; CO(2) is released and the remaining methylamine moiety is then transferred to the lipoamide cofactor of the H protein. This Anoxybacillus flavithermus (strain DSM 21510 / WK1) protein is Probable glycine dehydrogenase (decarboxylating) subunit 1.